Reading from the N-terminus, the 128-residue chain is Sulfurtransferase TusD (128 aa).

The active-site Cysteine persulfide intermediate is Cys-78.

The protein belongs to the DsrE/TusD family. In terms of assembly, heterohexamer, formed by a dimer of trimers. The hexameric TusBCD complex contains 2 copies each of TusB, TusC and TusD. The TusBCD complex interacts with TusE.

The protein resides in the cytoplasm. Functionally, part of a sulfur-relay system required for 2-thiolation of 5-methylaminomethyl-2-thiouridine (mnm(5)s(2)U) at tRNA wobble positions. Accepts sulfur from TusA and transfers it in turn to TusE. The polypeptide is Sulfurtransferase TusD (Escherichia coli O45:K1 (strain S88 / ExPEC)).